Consider the following 354-residue polypeptide: Holliday junction branch migration complex subunit RuvB (354 aa).

Polar residues predominate over residues 1–10 (MAIKRNQGSN). Residues 1-36 (MAIKRNQGSNPKPEKKERLTKAETHQEQDNLEESIR) form a disordered region. A compositionally biased stretch (basic and acidic residues) spans 12–36 (KPEKKERLTKAETHQEQDNLEESIR). Residues 13–196 (PEKKERLTKA…FGLIQRLKFY (184 aa)) form a large ATPase domain (RuvB-L) region. ATP-binding positions include Ile35, Arg36, Gly77, Lys80, Thr81, Thr82, 143-145 (EDY), Arg186, Tyr196, and Arg233. A Mg(2+)-binding site is contributed by Thr81. Residues 197 to 267 (EPEELALIIK…LAAEALDIYQ (71 aa)) are small ATPAse domain (RuvB-S). A head domain (RuvB-H) region spans residues 270 to 354 (PQGLDWTDRL…EEQLSIFSEQ (85 aa)). DNA is bound by residues Arg325 and Arg330.

It belongs to the RuvB family. As to quaternary structure, homohexamer. Forms an RuvA(8)-RuvB(12)-Holliday junction (HJ) complex. HJ DNA is sandwiched between 2 RuvA tetramers; dsDNA enters through RuvA and exits via RuvB. An RuvB hexamer assembles on each DNA strand where it exits the tetramer. Each RuvB hexamer is contacted by two RuvA subunits (via domain III) on 2 adjacent RuvB subunits; this complex drives branch migration. In the full resolvosome a probable DNA-RuvA(4)-RuvB(12)-RuvC(2) complex forms which resolves the HJ.

Its subcellular location is the cytoplasm. The catalysed reaction is ATP + H2O = ADP + phosphate + H(+). The RuvA-RuvB-RuvC complex processes Holliday junction (HJ) DNA during genetic recombination and DNA repair, while the RuvA-RuvB complex plays an important role in the rescue of blocked DNA replication forks via replication fork reversal (RFR). RuvA specifically binds to HJ cruciform DNA, conferring on it an open structure. The RuvB hexamer acts as an ATP-dependent pump, pulling dsDNA into and through the RuvAB complex. RuvB forms 2 homohexamers on either side of HJ DNA bound by 1 or 2 RuvA tetramers; 4 subunits per hexamer contact DNA at a time. Coordinated motions by a converter formed by DNA-disengaged RuvB subunits stimulates ATP hydrolysis and nucleotide exchange. Immobilization of the converter enables RuvB to convert the ATP-contained energy into a lever motion, pulling 2 nucleotides of DNA out of the RuvA tetramer per ATP hydrolyzed, thus driving DNA branch migration. The RuvB motors rotate together with the DNA substrate, which together with the progressing nucleotide cycle form the mechanistic basis for DNA recombination by continuous HJ branch migration. Branch migration allows RuvC to scan DNA until it finds its consensus sequence, where it cleaves and resolves cruciform DNA. The polypeptide is Holliday junction branch migration complex subunit RuvB (Crocosphaera subtropica (strain ATCC 51142 / BH68) (Cyanothece sp. (strain ATCC 51142))).